A 366-amino-acid chain; its full sequence is Hydroxyproline O-arabinosyltransferase 1 (366 aa).

Residues 6-26 form a helical; Signal-anchor membrane-spanning segment; that stretch reads TLFYPLLITLSVALITYNIII.

In terms of tissue distribution, ubiquitous.

It localises to the golgi apparatus. The protein resides in the cis-Golgi network membrane. It carries out the reaction trans-4-hydroxy-L-prolyl-[protein] + UDP-beta-L-arabinofuranose = O-(beta-L-arabinofuranosyl)-trans-4-hydroxy-L-prolyl-[protein] + UDP + H(+). Functionally, glycosyltransferase involved in the O-arabinosylation of several proteins including extensins and small signaling peptides. Catalyzes the transfer of the initial L-arabinose to the hydroxyl group of Hyp residues. Contributes redundantly with HPAT2 and HPAT3 to arabinosylation of EXT3. The protein is Hydroxyproline O-arabinosyltransferase 1 of Arabidopsis thaliana (Mouse-ear cress).